Consider the following 401-residue polypeptide: Argininosuccinate synthase (401 aa).

Residues 8–16 (AYSGGLDTS) and Ala-35 each bind ATP. Residues Tyr-86 and Ser-91 each contribute to the L-citrulline site. Position 116 (Gly-116) interacts with ATP. Residues Thr-118, Asn-122, and Asp-123 each contribute to the L-aspartate site. Asn-122 contributes to the L-citrulline binding site. Residues Arg-126, Ser-175, Ser-184, Glu-260, and Tyr-272 each contribute to the L-citrulline site.

The protein belongs to the argininosuccinate synthase family. Type 1 subfamily. Homotetramer.

It localises to the cytoplasm. It catalyses the reaction L-citrulline + L-aspartate + ATP = 2-(N(omega)-L-arginino)succinate + AMP + diphosphate + H(+). Its pathway is amino-acid biosynthesis; L-arginine biosynthesis; L-arginine from L-ornithine and carbamoyl phosphate: step 2/3. The sequence is that of Argininosuccinate synthase from Carboxydothermus hydrogenoformans (strain ATCC BAA-161 / DSM 6008 / Z-2901).